A 91-amino-acid chain; its full sequence is uncharacterized protein (91 aa).

2 helical membrane-spanning segments follow: residues 10 to 30 (VLFT…AGGI) and 46 to 66 (LLVA…QALS). A disordered region spans residues 68–91 (MRRQDGARGTARAGRNSARRRMPS).

Its subcellular location is the cell membrane. This is an uncharacterized protein from Sinorhizobium fredii (strain NBRC 101917 / NGR234).